We begin with the raw amino-acid sequence, 210 residues long: Small ribosomal subunit protein uS5 (210 aa).

The span at 1-23 (MARTPSSDRPERGRGGERGDRPN) shows a compositional bias: basic and acidic residues. Residues 1 to 40 (MARTPSSDRPERGRGGERGDRPNRGRGGAEQTPREREESE) form a disordered region. The S5 DRBM domain occupies 41–104 (FVDKLVHINR…EQAKRNMIKI (64 aa)).

Belongs to the universal ribosomal protein uS5 family. Part of the 30S ribosomal subunit. Contacts proteins S4 and S8.

In terms of biological role, with S4 and S12 plays an important role in translational accuracy. Located at the back of the 30S subunit body where it stabilizes the conformation of the head with respect to the body. The sequence is that of Small ribosomal subunit protein uS5 from Paramagnetospirillum magneticum (strain ATCC 700264 / AMB-1) (Magnetospirillum magneticum).